Here is a 221-residue protein sequence, read N- to C-terminus: Iron-sulfur cluster repair protein YtfE (221 aa).

Belongs to the RIC family. YtfE subfamily. In terms of assembly, homodimer.

It is found in the cytoplasm. Di-iron-containing protein involved in the repair of iron-sulfur clusters damaged by oxidative and nitrosative stress conditions. The sequence is that of Iron-sulfur cluster repair protein YtfE from Yersinia pseudotuberculosis serotype O:1b (strain IP 31758).